A 118-amino-acid chain; its full sequence is MSNVYDKAHELKKAIAESEEFSALKSMHEEIEADEIAKKMLENFRNLQLELQQKQMQGIQITEEEAQKAQQQFELVQQHELISKLMEAEQRLSVIIGDINKIITEPLEEIYGNPEGQQ.

Belongs to the UPF0342 family.

This is UPF0342 protein BpOF4_11360 from Alkalihalophilus pseudofirmus (strain ATCC BAA-2126 / JCM 17055 / OF4) (Bacillus pseudofirmus).